Here is a 406-residue protein sequence, read N- to C-terminus: MAKQEVKKIVLAYSGGLDTSIILKWLKNEYGCEVITFSADLGQGDELAPIREKAFATGADKVYIDDLKEEFVRDFVYPMFRANAIYEGHYLLGTSIARPLIAKRQMEIAKIEGADAVSHGATGKGNDQVRFELGYYHFNPAITVIAPWRDWKLNSRQALVNYAKKNDIPIPVTKKRPWSSDRNLLHISFEGAILEDTWAEAPENMYVLTKAPEKAPNKPQYVEIEFKNGNAVAVDGEKMSPAQLLAHLNFIGGEHGIGRVDLLENRSVGMKSRGVYETPGGTILREAHMAVEQITMDREVMHLRDSLVPRYAEMVYNGYWFSPEREMLQALIDESQKTVNGVARVKLYKGHCRTVGRKSETDSLFNLDFATFEKDQVYNQKDAEGFIKLNSLRLRIRSLQAAAKKK.

ATP-binding positions include 12-20 (AYSGGLDTS) and A39. L-citrulline-binding residues include Y90 and S95. G120 is a binding site for ATP. T122, N126, and D127 together coordinate L-aspartate. An L-citrulline-binding site is contributed by N126. Positions 130, 179, 188, 264, and 276 each coordinate L-citrulline.

It belongs to the argininosuccinate synthase family. Type 1 subfamily. In terms of assembly, homotetramer.

The protein resides in the cytoplasm. The enzyme catalyses L-citrulline + L-aspartate + ATP = 2-(N(omega)-L-arginino)succinate + AMP + diphosphate + H(+). It participates in amino-acid biosynthesis; L-arginine biosynthesis; L-arginine from L-ornithine and carbamoyl phosphate: step 2/3. The chain is Argininosuccinate synthase from Geotalea daltonii (strain DSM 22248 / JCM 15807 / FRC-32) (Geobacter daltonii).